Consider the following 688-residue polypeptide: Complement C1s subcomponent (688 aa).

The N-terminal stretch at M1–A15 is a signal peptide. The CUB 1 domain occupies E16–V130. Ca(2+) is bound by residues E60, D68, D113, D131, V132, and E134. A disulfide bridge links C65 with C83. An EGF-like; calcium-binding domain is found at D131 to G172. 3 cysteine pairs are disulfide-bonded: C135–C147, C143–C156, and C158–C171. N149, F150, and G153 together coordinate Ca(2+). N149 is modified ((3R)-3-hydroxyasparagine). A glycan (N-linked (GlcNAc...) asparagine) is linked at N174. Cysteines 175 and 202 form a disulfide. The 116-residue stretch at C175–D290 folds into the CUB 2 domain. Residues E226, D236, D275, G278, and Q279 each contribute to the Ca(2+) site. The cysteines at positions 234 and 251 are disulfide-linked. Sushi domains lie at I292–P356 and V357–P423. Disulfide bonds link C294-C341, C321-C354, C359-C403, C386-C421, C425-C549, C595-C618, and C627-C659. A glycan (N-linked (GlcNAc...) asparagine) is linked at N406. The 243-residue stretch at I438–Q680 folds into the Peptidase S1 domain. Active-site charge relay system residues include H475 and D529. S631 acts as the Charge relay system in catalysis.

It belongs to the peptidase S1 family. Core component of the complement C1 complex, a calcium-dependent complex composed of 1 molecule of the C1Q subcomplex, 2 molecules of C1R and 2 molecules of C1S. The C1Q subcomplex is composed 18 subunits: 3 chains of C1QA, C1QB, and C1QC trimerize to form 6 collagen-like triple helices connected to six globular ligand-recognition modules. Post-translationally, cleaved and activated by C1R to generate Complement C1s subcomponent heavy and light chains. In terms of processing, the iron and 2-oxoglutarate dependent 3-hydroxylation of aspartate and asparagine is (R) stereospecific within EGF domains.

The protein localises to the secreted. It is found in the cell surface. It carries out the reaction Cleavage of Arg-|-Ala bond in complement component C4 to form C4a and C4b, and Lys(or Arg)-|-Lys bond in complement component C2 to form C2a and C2b: the 'classical' pathway C3 convertase.. Its activity is regulated as follows. Cleaved and activated by C1R. Immunoglobulin-binding promotes autoactivation of C1R, which results in the cleavage of the Arg-Ile bond in the catalytic domain. Inhibited by C1 inhibitor (SERPING1). Component of the complement C1 complex, a multiprotein complex that initiates the classical pathway of the complement system, a cascade of proteins that leads to phagocytosis and breakdown of pathogens and signaling that strengthens the adaptive immune system. C1S is activated following association of the C1 complex with immunoglobulins (IgG or IgM) complexed with antigens to form antigen-antibody complexes on the surface of pathogens. C1S is cleaved and activated by C1R to generate C1s subcomponent heavy and light chains. C1s subcomponent light chain then cleaves and activates C2 and C4, the next components of the classical complement pathway. Its function is as follows. Serine protease component of the complement C1 complex, which catalyzes cleavage and activation of C2 and C4, the next components of the classical complement pathway. Also cleaves IGFBP5 and thereby inhibits the trophic effects of IGF1. In Rattus norvegicus (Rat), this protein is Complement C1s subcomponent.